The chain runs to 275 residues: Nitrogenase iron protein 1 (275 aa).

Gly9 to Ser16 contacts ATP. Cys98 lines the [4Fe-4S] cluster pocket. The residue at position 101 (Arg101) is an ADP-ribosylarginine; by dinitrogenase reductase ADP-ribosyltransferase. Residue Cys132 participates in [4Fe-4S] cluster binding.

This sequence belongs to the NifH/BchL/ChlL family. Homodimer. It depends on [4Fe-4S] cluster as a cofactor. Post-translationally, the reversible ADP-ribosylation of Arg-101 inactivates the nitrogenase reductase and regulates nitrogenase activity.

It catalyses the reaction N2 + 8 reduced [2Fe-2S]-[ferredoxin] + 16 ATP + 16 H2O = H2 + 8 oxidized [2Fe-2S]-[ferredoxin] + 2 NH4(+) + 16 ADP + 16 phosphate + 6 H(+). In terms of biological role, the key enzymatic reactions in nitrogen fixation are catalyzed by the nitrogenase complex, which has 2 components: the iron protein and the molybdenum-iron protein. This Methanobacterium ivanovii protein is Nitrogenase iron protein 1 (nifH1).